Here is a 77-residue protein sequence, read N- to C-terminus: Protein UL148C (77 aa).

Transmembrane regions (helical) follow at residues 10–30 (VLYL…AVAV) and 35–55 (IAWA…VGAA).

Its subcellular location is the host membrane. This Homo sapiens (Human) protein is Protein UL148C (UL148C).